Consider the following 465-residue polypeptide: Neuraminidase (465 aa).

The Intravirion segment spans residues 1-11; that stretch reads MLPSTIQTLTL. The helical transmembrane segment at 12 to 34 threads the bilayer; the sequence is FLTSGGVLLSLYVSASLSYLLYS. Positions 13-35 are involved in apical transport and lipid raft association; sequence LTSGGVLLSLYVSASLSYLLYSD. The Virion surface portion of the chain corresponds to 35–465; the sequence is DILLKFSSKI…DTVTGVDMAL (431 aa). A hypervariable stalk region region spans residues 38–85; it reads LKFSSKITAPTMTLDCANASNVQAVNRSATKEMTFLLPEPEWTYPRLS. Asparagine 55 and asparagine 63 each carry an N-linked (GlcNAc...) asparagine; by host glycan. Cystine bridges form between cysteine 86/cysteine 419, cysteine 121/cysteine 126, cysteine 181/cysteine 228, cysteine 230/cysteine 235, cysteine 276/cysteine 290, cysteine 278/cysteine 288, cysteine 317/cysteine 336, and cysteine 423/cysteine 446. Residues 88-465 form a head of neuraminidase region; sequence GSTFQKALLI…DTVTGVDMAL (378 aa). Arginine 115 is a binding site for substrate. Asparagine 143 carries an N-linked (GlcNAc...) asparagine; by host glycan. The active-site Proton donor/acceptor is the aspartate 148. Residue arginine 149 coordinates substrate. 274–275 is a binding site for substrate; the sequence is EE. N-linked (GlcNAc...) asparagine; by host glycosylation occurs at asparagine 283. Arginine 291 contributes to the substrate binding site. The Ca(2+) site is built by aspartate 292, threonine 296, aspartate 323, glycine 343, and glycine 345. Residue arginine 373 coordinates substrate. Tyrosine 408 serves as the catalytic Nucleophile.

Belongs to the glycosyl hydrolase 34 family. In terms of assembly, homotetramer. Ca(2+) serves as cofactor. N-glycosylated.

It localises to the virion membrane. Its subcellular location is the host apical cell membrane. It catalyses the reaction Hydrolysis of alpha-(2-&gt;3)-, alpha-(2-&gt;6)-, alpha-(2-&gt;8)- glycosidic linkages of terminal sialic acid residues in oligosaccharides, glycoproteins, glycolipids, colominic acid and synthetic substrates.. Its activity is regulated as follows. Inhibited by the neuraminidase inhibitors zanamivir (Relenza) and oseltamivir (Tamiflu). These drugs interfere with the release of progeny virus from infected cells and are effective against all influenza strains. Resistance to neuraminidase inhibitors is quite rare. In terms of biological role, catalyzes the removal of terminal sialic acid residues from viral and cellular glycoconjugates. Cleaves off the terminal sialic acids on the glycosylated HA during virus budding to facilitate virus release. Additionally helps virus spread through the circulation by further removing sialic acids from the cell surface. These cleavages prevent self-aggregation and ensure the efficient spread of the progeny virus from cell to cell. Otherwise, infection would be limited to one round of replication. Described as a receptor-destroying enzyme because it cleaves a terminal sialic acid from the cellular receptors. May facilitate viral invasion of the upper airways by cleaving the sialic acid moieties on the mucin of the airway epithelial cells. Likely to plays a role in the budding process through its association with lipid rafts during intracellular transport. May additionally display a raft-association independent effect on budding. Plays a role in the determination of host range restriction on replication and virulence. Sialidase activity in late endosome/lysosome traffic seems to enhance virus replication. In Influenza B virus (strain B/Beijing/1/1987), this protein is Neuraminidase.